Reading from the N-terminus, the 346-residue chain is D-alanine--D-alanine ligase (346 aa).

Positions 133 to 326 (KFLAQKAGVK…LANSLPKERE (194 aa)) constitute an ATP-grasp domain. An ATP-binding site is contributed by 159–209 (YPIILKPARLGSSIGVSVVHDDSELAYAKDVAFEFDKDVLVEPFIKGVKEY). Residues Asp-282, Glu-294, and Asn-296 each coordinate Mg(2+).

The protein belongs to the D-alanine--D-alanine ligase family. The cofactor is Mg(2+). It depends on Mn(2+) as a cofactor.

It is found in the cytoplasm. The enzyme catalyses 2 D-alanine + ATP = D-alanyl-D-alanine + ADP + phosphate + H(+). Its pathway is cell wall biogenesis; peptidoglycan biosynthesis. Functionally, cell wall formation. This Campylobacter concisus (strain 13826) protein is D-alanine--D-alanine ligase.